The chain runs to 143 residues: Large ribosomal subunit protein uL11 (143 aa).

This sequence belongs to the universal ribosomal protein uL11 family. Part of the ribosomal stalk of the 50S ribosomal subunit. Interacts with L10 and the large rRNA to form the base of the stalk. L10 forms an elongated spine to which L12 dimers bind in a sequential fashion forming a multimeric L10(L12)X complex. In terms of processing, one or more lysine residues are methylated.

Its function is as follows. Forms part of the ribosomal stalk which helps the ribosome interact with GTP-bound translation factors. The protein is Large ribosomal subunit protein uL11 of Bordetella pertussis (strain Tohama I / ATCC BAA-589 / NCTC 13251).